The sequence spans 528 residues: Glutamyl-tRNA(Gln) amidotransferase subunit A, mitochondrial (528 aa).

Lysine 76 serves as the catalytic Charge relay system. The tract at residues 147 to 166 (QYREKRKQNPHSKNEDSDWL) is disordered. Serine 171 functions as the Charge relay system in the catalytic mechanism. Serine 195 functions as the Acyl-ester intermediate in the catalytic mechanism.

This sequence belongs to the amidase family. GatA subfamily. In terms of assembly, subunit of the heterotrimeric GatCAB amidotransferase (AdT) complex, composed of A (QRSL1), B (GATB) and C (GATC) subunits.

The protein resides in the mitochondrion. The catalysed reaction is L-glutamyl-tRNA(Gln) + L-glutamine + ATP + H2O = L-glutaminyl-tRNA(Gln) + L-glutamate + ADP + phosphate + H(+). Its function is as follows. Allows the formation of correctly charged Gln-tRNA(Gln) through the transamidation of misacylated Glu-tRNA(Gln) in the mitochondria. The reaction takes place in the presence of glutamine and ATP through an activated gamma-phospho-Glu-tRNA(Gln). This is Glutamyl-tRNA(Gln) amidotransferase subunit A, mitochondrial from Macaca fascicularis (Crab-eating macaque).